We begin with the raw amino-acid sequence, 254 residues long: Major prion protein (254 aa).

The first 28 residues, 1–28, serve as a signal peptide directing secretion; sequence MANLGYWLLALFVTTCTDVGLCKKRPKP. The interaction with ADGRG6 stretch occupies residues 23–38; the sequence is KKRPKPGGWNTGGSRY. An interaction with GRB2, ERI3 and SYN1 region spans residues 23–231; sequence KKRPKPGGWN…SQAYYDGRRS (209 aa). Residues 24–107 are disordered; it reads KRPKPGGWNT…QWNKPSKPKT (84 aa). 5 consecutive repeat copies span residues 51-59, 60-67, 68-75, 76-83, and 84-91. A 5 X 8 AA tandem repeats of P-H-G-G-G-W-G-Q region spans residues 51-91; the sequence is PQSGGTWGQPHGGGWGQPHGGGWGQPHGGGWGQPHGGGWSQ. Residues 55–95 are compositionally biased toward gly residues; that stretch reads GTWGQPHGGGWGQPHGGGWGQPHGGGWGQPHGGGWSQGGGT. 12 residues coordinate Cu(2+): histidine 61, glycine 62, glycine 63, histidine 69, glycine 70, glycine 71, histidine 77, glycine 78, glycine 79, histidine 85, glycine 86, and glycine 87. Cysteine 179 and cysteine 214 are oxidised to a cystine. N-linked (GlcNAc...) asparagine glycans are attached at residues asparagine 181 and asparagine 197. The GPI-anchor amidated serine moiety is linked to residue serine 231. Positions 232 to 254 are cleaved as a propeptide — removed in mature form; that stretch reads SAVLFSSPPVILLISFLIFLIVG.

It belongs to the prion family. As to quaternary structure, monomer and homodimer. Has a tendency to aggregate into amyloid fibrils containing a cross-beta spine, formed by a steric zipper of superposed beta-strands. Soluble oligomers may represent an intermediate stage on the path to fibril formation. Copper binding may promote oligomerization. Interacts with GRB2, APP, ERI3/PRNPIP and SYN1. Mislocalized cytosolically exposed PrP interacts with MGRN1; this interaction alters MGRN1 subcellular location and causes lysosomal enlargement. Interacts with APP. Interacts with KIAA1191. Interacts with ADGRG6.

Its subcellular location is the cell membrane. It is found in the golgi apparatus. Functionally, its primary physiological function is unclear. May play a role in neuronal development and synaptic plasticity. May be required for neuronal myelin sheath maintenance. May promote myelin homeostasis through acting as an agonist for ADGRG6 receptor. May play a role in iron uptake and iron homeostasis. Soluble oligomers are toxic to cultured neuroblastoma cells and induce apoptosis (in vitro). Association with GPC1 (via its heparan sulfate chains) targets PRNP to lipid rafts. Also provides Cu(2+) or Zn(2+) for the ascorbate-mediated GPC1 deaminase degradation of its heparan sulfate side chains. In Rattus norvegicus (Rat), this protein is Major prion protein (Prnp).